We begin with the raw amino-acid sequence, 895 residues long: MTTLDHVIATHQSEWVSFSEEPLFPTPLEGGTEEHFPGLSSSSDRSESSSGENHAVDEGSQDLSHSEQDDSSEKMGLISEAASPPGSPVQPTPDLASAISNWVQFEDDTPWSNTSAPHKETALTLTVPCWTCPSLDSLRRCPLASESSWTTHSEDTSSPSVAPSYTDLQLINAEEQASGRASGTDSTDNSSSLQEDEEVEMETISWWAGSPAMNGHPAVPQVTTARFPSWVTFEDNEVGCPSPTVPSPKKPNAPSAATAGPDVPFNSTGSFKRDRPKSTLMNLSKVQKLDISSLNRPPSVTEAPPWRATNPFLNESLQDIQPSPINPFSAFFEEQERRSQNSSISGTSGKSQRDSLIVIYQDAISFDDSGKSQSHPDAIEKLKQLQIDDPDPVGNAALPDDDPTASVEPDAPSPTSALSQPRDGWPMMLRIPEKKNIMSSRHWGPIYIKLTDSGYLQLYYEQGLEKPFREFKLEICHEVSEPRLQNYDENGRIHSLRIDRVTYKEKKKYQPKPAVAHAAEREQVIKLGTTNYDDFLSFIHAVQDRLMDLPVQSMDLSTVGLNYLEEEITVDIRDEFSGTVSKGDNQILQHHVLTRIHILSFLSGLAECRLGLNDILIKGNEIVSRQDIMPTTTTKWIKLHECRFHGCVDEDVFNSSRVILFNPLDACRFELMRFRTVFAEKTLPFTLRTAASINGAEVEVQSWLRMSPGFSSNRDPLTQVPCENVMVRYPVPSEWVKNFRRESVLGEKSLKAKVNRGASFGSAGASGSEPVMRVTLGTAKYEHAFNSIVWRINRLPDKNSASGHPHCFFCHLELGSDREVPSRFANHVNVEFSMPTTSASKAAVRSISVEDKPDVRKWVNYSAHYSYKVEIEQKKSLKPDFEGEDLENPKECGVQ.

Disordered stretches follow at residues 10–101 (THQS…AISN), 144–204 (ASES…METI), and 236–279 (NEVG…PKST). Residues 64-73 (SHSEQDDSSE) show a composition bias toward basic and acidic residues. Composition is skewed to polar residues over residues 145-169 (SESSWTTHSEDTSSPSVAPSYTDLQ) and 179-193 (GRASGTDSTDNSSSL). Phosphoserine is present on residues S278, S284, and S299. 2 disordered regions span residues 291-326 (ISSLNRPPSVTEAPPWRATNPFLNESLQDIQPSPIN) and 386-424 (QIDDPDPVGNAALPDDDPTASVEPDAPSPTSALSQPRDG). 2 consecutive short sequence motifs (NPF) follow at residues 310-312 (NPF) and 326-328 (NPF). The span at 311 to 323 (PFLNESLQDIQPS) shows a compositional bias: polar residues. The SHD domain occupies 424–557 (GWPMMLRIPE…DLPVQSMDLS (134 aa)). The MHD domain occupies 565 to 872 (EEEITVDIRD…AHYSYKVEIE (308 aa)). Residue S759 is modified to Phosphoserine.

Belongs to the Stoned B family. In terms of assembly, interacts with the second C2 domain of synaptotagmins SYT1 and SYT2. Interacts with EPS15, EPS15R and ITSN1. Interacts indirectly with the AP-2 adapter complex. Interacts with TOR1A and COPS4; the interaction controls STON2 protein stability. Phosphorylated in vitro by PKD. In terms of processing, neddylated and ubiquitinated; leading to its degradation and inhibited by TOR1A and COPS4.

It is found in the synapse. The protein resides in the synaptosome. The protein localises to the cytoplasm. Its subcellular location is the membrane. Adapter protein involved in endocytic machinery. Involved in the synaptic vesicle recycling. May facilitate clathrin-coated vesicle uncoating. The protein is Stonin-2 (Ston2) of Rattus norvegicus (Rat).